The sequence spans 354 residues: MYGGKSAEHNVSLQTALAVTKALNTEKFDIHPIYITEKGEWQRGPLLTEPVSNVKMLQLEQNGESFALSALNREMFPEASPDEKAPIDVVFPLLHGPNGEDGTIQGLLELLNVPYVGNGVLASSAGMDKVIMKHLFAQAGLPQAKYAAFLKKDWKQTPDSCLQQVEKELGYPCFVKPANLGSSVGISKCRNREELEKAFELAFEYDRKIVVEEGIAGREIEIGVLGNDEPKCSAVGEIAPKTDFYDYKAKYEDGDTDLMIPAQVTDEQYAEISEMAIKAFKAIDGSGLVRADFFLTNDGQVLINEVNTMPGFTPFSMFPLLWKEAGVDYSDLIEQLVELAKERHAEKQLIKHTF.

The 206-residue stretch at 133-338 (KHLFAQAGLP…YSDLIEQLVE (206 aa)) folds into the ATP-grasp domain. 166-221 (EKELGYPCFVKPANLGSSVGISKCRNREELEKAFELAFEYDRKIVVEEGIAGREIE) contacts ATP. Positions 292, 305, and 307 each coordinate Mg(2+).

It belongs to the D-alanine--D-alanine ligase family. Requires Mg(2+) as cofactor. The cofactor is Mn(2+).

It is found in the cytoplasm. It carries out the reaction 2 D-alanine + ATP = D-alanyl-D-alanine + ADP + phosphate + H(+). The protein operates within cell wall biogenesis; peptidoglycan biosynthesis. Cell wall formation. The chain is D-alanine--D-alanine ligase from Bacillus velezensis (strain DSM 23117 / BGSC 10A6 / LMG 26770 / FZB42) (Bacillus amyloliquefaciens subsp. plantarum).